The sequence spans 345 residues: S-adenosylmethionine:tRNA ribosyltransferase-isomerase (345 aa).

This sequence belongs to the QueA family. As to quaternary structure, monomer.

It localises to the cytoplasm. It catalyses the reaction 7-aminomethyl-7-carbaguanosine(34) in tRNA + S-adenosyl-L-methionine = epoxyqueuosine(34) in tRNA + adenine + L-methionine + 2 H(+). The protein operates within tRNA modification; tRNA-queuosine biosynthesis. In terms of biological role, transfers and isomerizes the ribose moiety from AdoMet to the 7-aminomethyl group of 7-deazaguanine (preQ1-tRNA) to give epoxyqueuosine (oQ-tRNA). The chain is S-adenosylmethionine:tRNA ribosyltransferase-isomerase from Helicobacter pylori (strain ATCC 700392 / 26695) (Campylobacter pylori).